A 464-amino-acid polypeptide reads, in one-letter code: Soluble pyridine nucleotide transhydrogenase (464 aa).

Asp-35–Cys-44 provides a ligand contact to FAD.

The protein belongs to the class-I pyridine nucleotide-disulfide oxidoreductase family. It depends on FAD as a cofactor.

The protein resides in the cytoplasm. It catalyses the reaction NAD(+) + NADPH = NADH + NADP(+). Conversion of NADPH, generated by peripheral catabolic pathways, to NADH, which can enter the respiratory chain for energy generation. This is Soluble pyridine nucleotide transhydrogenase from Pseudomonas syringae pv. tomato (strain ATCC BAA-871 / DC3000).